The following is a 73-amino-acid chain: MNFLLSKLLLGLIRFYQYCISPLIPPRCRYTPTCSQYAVEAVKKYGAFKGGRLAIKRIARCHPFGGHGHDPVP.

Belongs to the UPF0161 family.

Its subcellular location is the cell inner membrane. Its function is as follows. Could be involved in insertion of integral membrane proteins into the membrane. This Neisseria meningitidis serogroup C (strain 053442) protein is Putative membrane protein insertion efficiency factor.